Reading from the N-terminus, the 81-residue chain is Small ribosomal subunit protein bS18 (81 aa).

It belongs to the bacterial ribosomal protein bS18 family. In terms of assembly, part of the 30S ribosomal subunit. Forms a tight heterodimer with protein bS6.

Binds as a heterodimer with protein bS6 to the central domain of the 16S rRNA, where it helps stabilize the platform of the 30S subunit. This chain is Small ribosomal subunit protein bS18, found in Lactococcus lactis subsp. cremoris (strain MG1363).